The primary structure comprises 537 residues: MKMLTEHFDFPKLNFATIVISGATIIGIIFLRYLNYPTKVNVPVVGIGVRYTKWLAAIINVRHARQSIREGYAKYGDFAFQIPTMTRMEVFICDRQMTREYQNVDDYHLSFRAVMTEEFQFKWLLPGQAHEARIIPNSVIAKALSWQRTRANKPSDPFFESFSAEFMQGFQEEMRRLIQYQNSSVMSNRSGAVLDPAHGWHAVPCFPLALKVIGRLTTYVLFGKPLCQDATFLNMCCQFGDVIPRDAIILRSWPALARPLIVKILSAPRVMGKLRNILIVEIKSRRESHETNPMSDILDFTMAWVDRHPNASFDDQHIAEMMINTIFAALHTSSQLVVHTIFELASRPEYSDALLEEIDACFEKHGKGTKAALDSMFKVDSFIKETQRFNPLDASALARLALKDFTFSNGLNIPKGSVIFTPNSPIFEDERYYKDPKVFDGFRFARMRNDPKLGLFCDLTATNEQSMHFGTGRHACPGRFMVSDEVKLAVIHILSNFDFCIENFGPRPANQPFGKFLLPDMSAKIWLREKRAREKNL.

A helical transmembrane segment spans residues F10–F30. N182, N188, and N310 each carry an N-linked (GlcNAc...) asparagine glycan. C476 is a heme binding site.

The protein belongs to the cytochrome P450 family. Requires heme as cofactor.

It is found in the membrane. It participates in secondary metabolite biosynthesis. In terms of biological role, cytochrome P450 monooxygenase; part of the gene clusters that mediates the biosynthesis of lolitrems, indole-diterpene mycotoxins that are potent tremorgens in mammals, and are synthesized by clavicipitaceous fungal endophytes in association with their grass hosts. The geranylgeranyl diphosphate (GGPP) synthase ltmG is proposed to catalyze the first step in lolitrem biosynthesis. LtmG catalyzes a series of iterative condensations of isopentenyl diphosphate (IPP) with dimethylallyl diphosphate (DMAPP), geranyl diphosphate (GPP), and farnesyl diphosphate (FPP), to form GGPP. GGPP then condenses with indole-3-glycerol phosphate to form 3-geranylgeranylindole, an acyclic intermediate, to be incorporated into paxilline. Either ltmG or ltmC could be responsible for this step, as both are putative prenyl transferases. The FAD-dependent monooxygenase ltmM then catalyzes the epoxidation of the two terminal alkenes of the geranylgeranyl moiety, which is subsequently cyclized by ltmB, to paspaline. The cytochrome P450 monooxygenases ltmQ and ltmP can sequentially oxidize paspaline to terpendole E and terpendole F. Alternatively, ltmP converts paspaline to an intermediate which is oxidized by ltmQ to terpendole F. LtmF, ltmK, ltmE and ltmJ appear to be unique to the epichloe endophytes. The prenyltransferase ltmF is involved in the 27-hydroxyl-O-prenylation. The cytochrome P450 monooxygenase ltmK is required for the oxidative acetal ring formation. The multi-functional prenyltransferase ltmE is required for C20- and C21-prenylations of the indole ring of paspalanes and acts together with the cytochrome P450 monooxygenase ltmJ to yield lolitremanes by multiple oxidations and ring closures. The stereoisomer pairs of lolitriol and lolitrem N or lolitrem B and lolitrem F may be attributed to variations in the way in which ring closure can occur under the action of ltmJ. While the major product of this pathway is lolitrem B, the prenyl transferases and cytochrome P450 monooxygenases identified in this pathway have a remarkable versatility in their regio- and stereo-specificities to generate a diverse range of metabolites that are products of a metabolic grid rather than a linear pathway. The polypeptide is Cytochrome P450 monooxygenase ltmQ (Epichloe festucae var. lolii (Neotyphodium lolii)).